Reading from the N-terminus, the 234-residue chain is MVDTKALRAEQLQRASEISLQDDIASESVRFIAGADVGFEQQGEVTRAAIAVLRYPSLELVEYQVARVATSLPYIPGLLSFREYPALLAAWAQIQQRPQLVFVDGQGIAHPRRLGVASHFGLLVDVPTIGVAKSRLCGNFEPLGDDNGALQPLVDADEQLGWVWRSKSRCNPLFISPGHRVSVGSALEWVQHCIAGYRLPEPTRWADAIASNRPQFQRWVRKSPDLLGKHRDMI.

Residues Asp-36 and Asp-104 each coordinate Mg(2+).

It belongs to the endonuclease V family. Requires Mg(2+) as cofactor.

It localises to the cytoplasm. It carries out the reaction Endonucleolytic cleavage at apurinic or apyrimidinic sites to products with a 5'-phosphate.. Functionally, DNA repair enzyme involved in the repair of deaminated bases. Selectively cleaves double-stranded DNA at the second phosphodiester bond 3' to a deoxyinosine leaving behind the intact lesion on the nicked DNA. This is Endonuclease V from Yersinia enterocolitica serotype O:8 / biotype 1B (strain NCTC 13174 / 8081).